Here is an 891-residue protein sequence, read N- to C-terminus: uncharacterized protein (891 aa).

Residues 48–64 (GHKKPRSESRKKYDAKK) are compositionally biased toward basic and acidic residues. The interval 48–86 (GHKKPRSESRKKYDAKKQHQSSHFATPVKGVESSEPTEK) is disordered. Residues Ser-261, Ser-263, Ser-265, and Ser-268 each carry the phosphoserine modification. The tract at residues 795-822 (QRTFSNESPRAVDSGFSRTSTPFSESTS) is disordered. The span at 810-822 (FSRTSTPFSESTS) shows a compositional bias: polar residues.

The protein localises to the nucleus. This is an uncharacterized protein from Schizosaccharomyces pombe (strain 972 / ATCC 24843) (Fission yeast).